Here is a 69-residue protein sequence, read N- to C-terminus: Putative membrane protein insertion efficiency factor (69 aa).

It belongs to the UPF0161 family.

Its subcellular location is the cell inner membrane. Functionally, could be involved in insertion of integral membrane proteins into the membrane. This chain is Putative membrane protein insertion efficiency factor, found in Geobacter metallireducens (strain ATCC 53774 / DSM 7210 / GS-15).